We begin with the raw amino-acid sequence, 971 residues long: MELSDANLQTLTEYLKKTLDPDPAIRRPAEKFLESVEGNQNYPLLLLTLLEKSQDNVIKVCASVTFKNYIKRNWRIVEDEPNKICEADRVAIKANIVHLMLSSPEQIQKQLSDAISIIGREDFPQKWPDLLTEMVNRFQSGDFHVINGVLRTAHSLFKRYRHEFKSNELWTEIKLVLDAFALPLTNLFKATIELCSTHANDASALRILFSSLILISKLFYSLNFQDLPEFFEDNMETWMNNFHTLLTLDNKLLQTDDEEEAGLLELLKSQICDNAALYAQKYDEEFQRYLPRFVTAIWNLLVTTGQEVKYDLLVSNAIQFLASVCERPHYKNLFEDQNTLTSICEKVIVPNMEFRAADEEAFEDNSEEYIRRDLEGSDIDTRRRAACDLVRGLCKFFEGPVTGIFSGYVNSMLQEYAKNPSVNWKHKDAAIYLVTSLASKAQTQKHGITQANELVNLTEFFVNHILPDLKSANVNEFPVLKADGIKYIMIFRNQVPKEHLLVSIPLLINHLQAESIVVHTYAAHALERLFTMRGPNNATLFTAAEIAPFVEILLTNLFKALTLPGSSENEYIMKAIMRSFSLLQEAIIPYIPTLITQLTQKLLAVSKNPSKPHFNHYMFEAICLSIRITCKANPAAVVNFEEALFLVFTEILQNDVQEFIPYVFQVMSLLLETHKNDIPSSYMALFPHLLQPVLWERTGNIPALVRLLQAFLERGSNTIASAAADKIPGLLGVFQKLIASKANDHQGFYLLNSIIEHMPPESVDQYRKQIFILLFQRLQNSKTTKFIKSFLVFINLYCIKYGALALQEIFDGIQPKMFGMVLEKIIIPEIQKVSGNVEKKICAVGITKLLTECPPMMDTEYTKLWTPLLQSLIGLFELPEDDTIPDEEHFIDIEDTPGYQTAFSQLAFAGKKEHDPVGQMVNNPKIHLAQSLHKLSTACPGRVPSMVSTSLNAEALQYLQGYLQAASVTLL.

Met1 is modified (N-acetylmethionine). The Importin N-terminal domain occupies 29–102; sequence AEKFLESVEG…KANIVHLMLS (74 aa). A Phosphoserine modification is found at Ser112. Residues Lys574 and Lys824 each carry the N6-acetyllysine modification. Phosphoserine is present on Ser931.

It belongs to the XPO2/CSE1 family. In terms of assembly, found in a complex with CSE1L/XPO2, Ran and KPNA2. Binds with high affinity to importin-alpha only in the presence of RanGTP. The complex is dissociated by the combined action of RanBP1 and RanGAP1. Interacts with CFTR. Detected in brain, placenta, ovary, testis and trachea (at protein level). Widely expressed. Highly expressed in testis and in proliferating cells.

The protein localises to the cytoplasm. It localises to the nucleus. Its function is as follows. Export receptor for importin-alpha. Mediates importin-alpha re-export from the nucleus to the cytoplasm after import substrates (cargos) have been released into the nucleoplasm. In the nucleus binds cooperatively to importin-alpha and to the GTPase Ran in its active GTP-bound form. Docking of this trimeric complex to the nuclear pore complex (NPC) is mediated through binding to nucleoporins. Upon transit of a nuclear export complex into the cytoplasm, disassembling of the complex and hydrolysis of Ran-GTP to Ran-GDP (induced by RANBP1 and RANGAP1, respectively) cause release of the importin-alpha from the export receptor. CSE1L/XPO2 then return to the nuclear compartment and mediate another round of transport. The directionality of nuclear export is thought to be conferred by an asymmetric distribution of the GTP- and GDP-bound forms of Ran between the cytoplasm and nucleus. This is Exportin-2 (CSE1L) from Homo sapiens (Human).